The following is an 85-amino-acid chain: Protein AC4 (85 aa).

Glycine 2 carries N-myristoyl glycine; by host lipidation.

Belongs to the geminiviridae protein AC4/C4 family. In terms of assembly, interacts with Arabidopsis thaliana ASK7/ASK-eta and ASK6/ASK-zeta proteins. In terms of processing, phosphorylated by Arabidopsis thaliana ASK7/ASK-eta mainly on threonine and serine residues.

The protein resides in the host cell membrane. Functionally, pathogenicity determinant. May act as a suppressor of RNA-mediated gene silencing, also known as post-transcriptional gene silencing (PTGS), a mechanism of plant viral defense that limits the accumulation of viral RNAs. May repress the AL61 promoter. This chain is Protein AC4, found in Solanum lycopersicum (Tomato).